The chain runs to 331 residues: DNA-directed RNA polymerase subunit alpha (331 aa).

The segment at 1-235 (MTMHIRWRGM…KHLNPFVQYR (235 aa)) is alpha N-terminal domain (alpha-NTD). Residues 255–331 (QLEAKLNMTL…GMRVPNQPLF (77 aa)) form an alpha C-terminal domain (alpha-CTD) region.

It belongs to the RNA polymerase alpha chain family. As to quaternary structure, homodimer. The RNAP catalytic core consists of 2 alpha, 1 beta, 1 beta' and 1 omega subunit. When a sigma factor is associated with the core the holoenzyme is formed, which can initiate transcription.

The catalysed reaction is RNA(n) + a ribonucleoside 5'-triphosphate = RNA(n+1) + diphosphate. Its function is as follows. DNA-dependent RNA polymerase catalyzes the transcription of DNA into RNA using the four ribonucleoside triphosphates as substrates. This is DNA-directed RNA polymerase subunit alpha from Rhodopirellula baltica (strain DSM 10527 / NCIMB 13988 / SH1).